The chain runs to 494 residues: Acetyl-coenzyme A carboxylase carboxyl transferase subunit beta, chloroplastic (494 aa).

Residues 226–494 (LWVQCENCYG…VPLNQNETEH (269 aa)) enclose the CoA carboxyltransferase N-terminal domain. Zn(2+)-binding residues include Cys-230, Cys-233, Cys-249, and Cys-252. The C4-type zinc-finger motif lies at 230 to 252 (CENCYGLNYKKFLKSKMNICEQC).

Belongs to the AccD/PCCB family. As to quaternary structure, acetyl-CoA carboxylase is a heterohexamer composed of biotin carboxyl carrier protein, biotin carboxylase and 2 subunits each of ACCase subunit alpha and ACCase plastid-coded subunit beta (accD). It depends on Zn(2+) as a cofactor.

It localises to the plastid. The protein resides in the chloroplast stroma. The catalysed reaction is N(6)-carboxybiotinyl-L-lysyl-[protein] + acetyl-CoA = N(6)-biotinyl-L-lysyl-[protein] + malonyl-CoA. It functions in the pathway lipid metabolism; malonyl-CoA biosynthesis; malonyl-CoA from acetyl-CoA: step 1/1. Functionally, component of the acetyl coenzyme A carboxylase (ACC) complex. Biotin carboxylase (BC) catalyzes the carboxylation of biotin on its carrier protein (BCCP) and then the CO(2) group is transferred by the transcarboxylase to acetyl-CoA to form malonyl-CoA. This Coffea arabica (Arabian coffee) protein is Acetyl-coenzyme A carboxylase carboxyl transferase subunit beta, chloroplastic.